Reading from the N-terminus, the 571-residue chain is Putative clathrin assembly protein At2g01600 (571 aa).

In terms of domain architecture, ENTH spans 24-161 (RVNSEYADLD…ECFRVLKYDT (138 aa)). 2 disordered regions span residues 325–346 (YRPD…REML) and 474–571 (PAPN…TGLI). Residues 337 to 346 (EPSHEEREML) are compositionally biased toward basic and acidic residues. Over residues 508 to 522 (QQTYQHQPQPTYQHQ) the composition is skewed to low complexity. Polar residues-rich tracts occupy residues 523–532 (SNPPTNNSNP) and 543–571 (PVSQ…TGLI).

Its subcellular location is the membrane. The protein resides in the clathrin-coated pit. It localises to the golgi apparatus. It is found in the cytoplasmic vesicle. The protein localises to the clathrin-coated vesicle. In Arabidopsis thaliana (Mouse-ear cress), this protein is Putative clathrin assembly protein At2g01600.